Consider the following 976-residue polypeptide: Probable outer membrane protein PmpA (976 aa).

Residues 1-50 form the signal peptide; the sequence is MNQVIKTIALCYQKYISRASNKTFSIHNTLSLSLLPKCLLGSLIIYTSHA. In terms of domain architecture, Autotransporter spans 671–976; the sequence is GNAIPNSLWS…SLSCGGYVGF (306 aa).

Belongs to the PMP outer membrane protein family.

Its subcellular location is the secreted. The protein resides in the cell wall. It localises to the cell outer membrane. The chain is Probable outer membrane protein PmpA (pmpA) from Chlamydia muridarum (strain MoPn / Nigg).